The following is a 485-amino-acid chain: Retron Mx162 reverse transcriptase (485 aa).

The segment at 1–33 is disordered; the sequence is MTARLDPFVPAASPQAVPTPELTAPSSDAAAKR. Residues 167–407 form the Reverse transcriptase domain; it reads RWFAFHREVD…TRQRVTGLVV (241 aa). 3 residues coordinate Mg(2+): aspartate 250, aspartate 346, and aspartate 347.

This sequence belongs to the bacterial reverse transcriptase family.

It carries out the reaction DNA(n) + a 2'-deoxyribonucleoside 5'-triphosphate = DNA(n+1) + diphosphate. With respect to regulation, msDNA synthesis is inhibited by rifampicin and chloramphenicol. Reverse transcriptase (RT) responsible for synthesis of msDNA-Mx162 (a branched molecule with RNA linked by a 2',5'-phosphodiester bond to ssDNA). The retron transcript serves as primer (from a conserved internal G residue) and template for the reaction, and codes for the RT. The retron is involved in antiviral defense. This is Retron Mx162 reverse transcriptase from Myxococcus xanthus.